Reading from the N-terminus, the 385-residue chain is Succinate--CoA ligase [ADP-forming] subunit beta (385 aa).

An ATP-grasp domain is found at 9–244 (KEVLRKYGVS…LDEEDPKEIE (236 aa)). Residues Lys-46, 53 to 55 (GRG), Glu-99, Cys-102, and Glu-107 each bind ATP. Mg(2+) contacts are provided by Asn-199 and Asp-213. Residues Asn-264 and 321 to 323 (GIM) contribute to the substrate site.

The protein belongs to the succinate/malate CoA ligase beta subunit family. In terms of assembly, heterotetramer of two alpha and two beta subunits. The cofactor is Mg(2+).

It carries out the reaction succinate + ATP + CoA = succinyl-CoA + ADP + phosphate. The enzyme catalyses GTP + succinate + CoA = succinyl-CoA + GDP + phosphate. The protein operates within carbohydrate metabolism; tricarboxylic acid cycle; succinate from succinyl-CoA (ligase route): step 1/1. Functionally, succinyl-CoA synthetase functions in the citric acid cycle (TCA), coupling the hydrolysis of succinyl-CoA to the synthesis of either ATP or GTP and thus represents the only step of substrate-level phosphorylation in the TCA. The beta subunit provides nucleotide specificity of the enzyme and binds the substrate succinate, while the binding sites for coenzyme A and phosphate are found in the alpha subunit. The polypeptide is Succinate--CoA ligase [ADP-forming] subunit beta (Bacillus velezensis (strain DSM 23117 / BGSC 10A6 / LMG 26770 / FZB42) (Bacillus amyloliquefaciens subsp. plantarum)).